The primary structure comprises 245 residues: 5-oxoprolinase subunit A (245 aa).

This sequence belongs to the LamB/PxpA family. Forms a complex composed of PxpA, PxpB and PxpC.

The enzyme catalyses 5-oxo-L-proline + ATP + 2 H2O = L-glutamate + ADP + phosphate + H(+). Catalyzes the cleavage of 5-oxoproline to form L-glutamate coupled to the hydrolysis of ATP to ADP and inorganic phosphate. The protein is 5-oxoprolinase subunit A of Serratia proteamaculans (strain 568).